We begin with the raw amino-acid sequence, 279 residues long: DegV domain-containing protein SP_1112 (279 aa).

The DegV domain occupies 4-277 (IKIVTDSSVT…ENAWAILIRY (274 aa)). Hexadecanoate contacts are provided by threonine 62 and serine 94.

May bind long-chain fatty acids, such as palmitate, and may play a role in lipid transport or fatty acid metabolism. The chain is DegV domain-containing protein SP_1112 from Streptococcus pneumoniae serotype 4 (strain ATCC BAA-334 / TIGR4).